Reading from the N-terminus, the 291-residue chain is MFTGSIPALVTPFRNGKFDEVVFRAHVDRMIEGGSSALVPCGTTGESATMTIEEHNYVMAVCIDQTKGRVPVIAGCGSNDTKVSLAHLRHAAKAGAAAGLVVLPYYNKPSQEGLYAHYSYLAENSPIPILIYNVPGRTSSDISVETLARLSRLPAIVGMKDASGHIARVSAQRLACGSDFCQLSGNDDMALAFNAMGGVGCISVTANVAPKLSADFQKACAENRYQDALALQDRLYPLHSALFSDSSPAPVKYALSRLYSDFSPELRLPLVQPSDHSKALVDAALSHARLI.

T44 is a binding site for pyruvate. Y132 serves as the catalytic Proton donor/acceptor. The active-site Schiff-base intermediate with substrate is the K160. Pyruvate is bound at residue I202.

The protein belongs to the DapA family. In terms of assembly, homotetramer; dimer of dimers.

The protein localises to the cytoplasm. It catalyses the reaction L-aspartate 4-semialdehyde + pyruvate = (2S,4S)-4-hydroxy-2,3,4,5-tetrahydrodipicolinate + H2O + H(+). It participates in amino-acid biosynthesis; L-lysine biosynthesis via DAP pathway; (S)-tetrahydrodipicolinate from L-aspartate: step 3/4. Catalyzes the condensation of (S)-aspartate-beta-semialdehyde [(S)-ASA] and pyruvate to 4-hydroxy-tetrahydrodipicolinate (HTPA). The polypeptide is 4-hydroxy-tetrahydrodipicolinate synthase (Zymomonas mobilis subsp. mobilis (strain ATCC 31821 / ZM4 / CP4)).